The primary structure comprises 79 residues: Sec-independent protein translocase protein TatA (79 aa).

Residues 1 to 21 (MGGLQPWHWVIVIAVFVLLFG) form a helical membrane-spanning segment. A compositionally biased stretch (basic and acidic residues) spans 43 to 52 (IKEMQSEGKS). Residues 43-79 (IKEMQSEGKSDNPPATPITSERVDTNPTAEQPDKRSA) form a disordered region.

The protein belongs to the TatA/E family. As to quaternary structure, the Tat system comprises two distinct complexes: a TatABC complex, containing multiple copies of TatA, TatB and TatC subunits, and a separate TatA complex, containing only TatA subunits. Substrates initially bind to the TatABC complex, which probably triggers association of the separate TatA complex to form the active translocon.

The protein resides in the cell membrane. Functionally, part of the twin-arginine translocation (Tat) system that transports large folded proteins containing a characteristic twin-arginine motif in their signal peptide across membranes. TatA could form the protein-conducting channel of the Tat system. The chain is Sec-independent protein translocase protein TatA from Mycobacterium sp. (strain JLS).